Consider the following 1227-residue polypeptide: MPQSTAQLKSPLLHTLLENLTQSSICTSTAIWHVPNPVNFVCNHNENSFDNKNNSVTTITTTDVSTNNHKNTNYDYEQQEQWSNEEINSNQESNEIYTMTFLKLNNAANRVAMNLANYLERKWSSITNKINRTQLNQHSLSIDEPIELRNQSDTVIALFMPPGIDRIVVQIACMKLHLAYMPLDRNVPAGRITQILHKLKPILILIDKDYYDFIYDDDHNDNDKMSDLSSSIDNNNKSLLSRKLSSNDFIIGNLNQLKLTFQLFDVKVYEYIKLMKLSKYYSRSDIYTASIPIRVCLFPFESDPIVLVLFTSGSTSSGPKPVKLRTTQLFNRLEWQWDSTSDMDLPNFENATCNSNTSVKRIGLAKTAWGFVDAFTELFSCLLAGIPVVVPGGSACPSEKSITDVQQLINLTKHFKISHITTVPTQMNLWLKQLRLKPKEIVTSHLSSLRTVIVSGDIVHPKMACEFFQLFKNPEMRLINLYGTTEVAGDVTGLVFRGEIDVKKHTKVVPCGLERENNKSGKPVLSVGTVIQGTAIFIVQDDDDHHLHHEKDNENQPDKWSNPSLSIIGSVDRKPNWDKFPFKILPKGHIGHVCILGQQVSDSASRCQRIESLPEDLNCVDTNKCKSDVESCENNSSKEIRVFMPGDLGFIDPQTNHLYICGRTNELIKINGIRFHANDIDNLFIELKKNWKAKNMTNCTREELLVNKVSETVTLTIQTVHGRDLKLVCFYVLHMNENQNTMNIEPKENYDKLEDLPKQDDFIAVFSHYLPPYLSPTFINIDHIPLMRTSGKVDKEYLRQYYYSKHHCEISEITKVLQPGWVNDPVKHMTENNNSTSDQSFGKNSRDFKLSRGRERARKVLAEVLGIRGPNGDVIPGRPKDDEDFYLLGGDSLLTVLTTEQLRQLGFNVNLDVFTKTGKIGSILTSLQNTESDFLKTQEPFTSDSWTVKEISMNKVLKKSHTCNLINRIPLMEDECYLSPTICPQGSYEIFIEQWNDGNFSVTERHEIVDVLVNAFIEKDRLSHALKLDRTDLTEAIEVFLNAHKSNPGIVLTARYYYENPYEHTFVKNKLVGVIISLPAKHVPSLHLTPKLALVQRFFDECSNKDQFQDISMDNLLATQMVAITSQSPYSKSKYLQYMLSNWKKISLKLLTRLERDLLRIAAKQGYSGVITFNTNEVTEEVCSQLGYKVIQTTMLKSFMNKENLLLLPQYERIRCSYMIKELNPSS.

Residues 1–850 (MPQSTAQLKS…FGKNSRDFKL (850 aa)) are adenylation. A Carrier domain is found at 851 to 931 (SRGRERARKV…SILTSLQNTE (81 aa)). S892 is modified (O-(pantetheine 4'-phosphoryl)serine). Residues 932–1227 (SDFLKTQEPF…YMIKELNPSS (296 aa)) form a condensation region.

The protein belongs to the NRP synthetase family. Pantetheine 4'-phosphate is required as a cofactor. In virgin and paired males, bilaterally expressed in some cells in the head. During pairing, expressed throughout the ventral side of the body probably in ciliated neurons. Highly expressed in virgin females in cells throughout the body and only weakly expressed in sexually mature females. In virgin females, expressed in some cells in the head and on the dorsal surface and lateral edges of body.

The catalysed reaction is tryptamine + beta-alanine + ATP = beta-alanyl-tryptamine + AMP + diphosphate + H(+). It catalyses the reaction beta-alanine + ATP + H(+) = beta-alanyl-5'-AMP + diphosphate. The enzyme catalyses beta-alanyl-5'-AMP + holo-[peptidyl-carrier protein] = beta-alanyl-[peptidyl-carrier protein] + AMP + H(+). It carries out the reaction beta-alanyl-[peptidyl-carrier protein] + tryptamine = beta-alanyl-tryptamine + holo-[peptidyl-carrier protein] + H(+). Its function is as follows. Catalyzes the condensation of beta-alanine with tryptamine to form beta-alanyl-tryptamine (BATT). Beta-alanyl-tryptamine is an essential pheromone produced by the male that stimulates female sexual development during pairing. The chain is Beta-alanyl-bioamine nonribosomal peptide synthetase from Schistosoma mansoni (Blood fluke).